Reading from the N-terminus, the 287-residue chain is Nucleotide-binding protein GM21_3387 (287 aa).

An ATP-binding site is contributed by 8-15 (GLSGSGKS). 59-62 (DIRS) is a binding site for GTP.

Belongs to the RapZ-like family.

Displays ATPase and GTPase activities. This Geobacter sp. (strain M21) protein is Nucleotide-binding protein GM21_3387.